We begin with the raw amino-acid sequence, 379 residues long: RING finger protein 215 (379 aa).

2 disordered regions span residues Met-1–Pro-21 and Ala-44–Arg-63. Residues Met-1–Pro-24 lie on the Cytoplasmic side of the membrane. Residues Leu-25–Ala-45 form a helical membrane-spanning segment. Topologically, residues Asp-46–Pro-252 are extracellular. The N-linked (GlcNAc...) asparagine glycan is linked to Asn-188. The chain crosses the membrane as a helical span at residues Leu-253–Val-273. Topologically, residues Gln-274–Asp-379 are cytoplasmic. The RING-type; atypical zinc finger occupies Cys-327 to Lys-368.

It is found in the membrane. The polypeptide is RING finger protein 215 (Rnf215) (Mus musculus (Mouse)).